The chain runs to 397 residues: Lysophospholipid transporter LplT (397 aa).

Topologically, residues 1–17 are periplasmic; it reads MSESVHTNTSLWSKGMK. Residues 18-38 traverse the membrane as a helical segment; that stretch reads AVIVAQFLSAFGDNALLFATL. Over 39–52 the chain is Cytoplasmic; it reads ALLKAQFYPEWSQP. The chain crosses the membrane as a helical span at residues 53-73; it reads ILQMVFVGAYILFAPFVGQVA. Residues 74–90 are Periplasmic-facing; the sequence is DSFAKGRVMMFANGLKL. The chain crosses the membrane as a helical span at residues 91-111; it reads LGAASICFGINPFLGYTLVGV. Residues 112–144 lie on the Cytoplasmic side of the membrane; sequence GAAAYSPAKYGILGELTTGSKLVKANGLMEAST. The chain crosses the membrane as a helical span at residues 145-165; it reads IAAILLGSVAGGVLADWHVLV. A topological domain (periplasmic) is located at residue Ala-166. A helical transmembrane segment spans residues 167–187; it reads LAACALAYGGAVVANIYIPKL. Residues 188-226 lie on the Cytoplasmic side of the membrane; the sequence is AAARPGQSWNLISMTRSFLNACTSLWRNGETRFSLVGTS. Residues 227 to 247 traverse the membrane as a helical segment; that stretch reads LFWGAGVTLRFLLVLWVPVAL. Residues 248–256 are Periplasmic-facing; that stretch reads GITDNATPT. Residues 257-277 form a helical membrane-spanning segment; the sequence is YLNAMVAIGIVVGAGAAAKLV. Topologically, residues 278–280 are cytoplasmic; that stretch reads TLE. A helical membrane pass occupies residues 281 to 301; sequence TVSRCMPAGILIGVVVLIFSL. Residues 302 to 304 lie on the Periplasmic side of the membrane; sequence QHE. A helical membrane pass occupies residues 305–325; sequence LLPAYALLMLIGVLGGFFVVP. The Cytoplasmic portion of the chain corresponds to 326–343; it reads LNALLQERGKKSVGAGNA. The helical transmembrane segment at 344 to 364 threads the bilayer; the sequence is IAVQNLGENSAMLLMLGIYSL. The Periplasmic portion of the chain corresponds to 365-366; it reads AV. The helical transmembrane segment at 367-387 threads the bilayer; the sequence is MVGIPVVPIGIGFGALFALAI. The Cytoplasmic portion of the chain corresponds to 388–397; sequence TALWIWQRRH.

This sequence belongs to the major facilitator superfamily. LplT (TC 2.A.1.42) family.

It is found in the cell inner membrane. Functionally, catalyzes the facilitated diffusion of 2-acyl-glycero-3-phosphoethanolamine (2-acyl-GPE) into the cell. This is Lysophospholipid transporter LplT from Escherichia coli O7:K1 (strain IAI39 / ExPEC).